A 200-amino-acid chain; its full sequence is 3-isopropylmalate dehydratase small subunit (200 aa).

The protein belongs to the LeuD family. LeuD type 1 subfamily. As to quaternary structure, heterodimer of LeuC and LeuD.

The enzyme catalyses (2R,3S)-3-isopropylmalate = (2S)-2-isopropylmalate. It functions in the pathway amino-acid biosynthesis; L-leucine biosynthesis; L-leucine from 3-methyl-2-oxobutanoate: step 2/4. Functionally, catalyzes the isomerization between 2-isopropylmalate and 3-isopropylmalate, via the formation of 2-isopropylmaleate. This Campylobacter jejuni (strain RM1221) protein is 3-isopropylmalate dehydratase small subunit.